An 811-amino-acid chain; its full sequence is MYSTKTDKKWQQKWDQTNIYTFDEKKSSKKLYTLEMFSYPSGSNLHAGHWFNYAPVDSWARMKRMQGYNVFQPMGFDAFGLPAENYAIKTGIHPKDSTEKNIDTMEKQLKSMGAMFNWENEVVTCRPDYYKWNQWLFLQLYKHDLAYRKNAPVNWCPSCNTVLANEQVKEGECERCGTEVTKKDLTQWFFKITDYTEELLKDLDNIDWPEKTKAMQRHWMGKSTGTDVTFKVADSDIKFNVFTTRVDTLFGVTYVVISPENDLVDSVTKEEYKEEIEKYREAAKKQTDIERQSITREKTGVSTGSYAINPINGRKVPIWIGDYVLNTYGTGAVMAVPAHDERDFEFATKYKLPIERVIEGGSSLPYVEYGKMINSDKFNGLYTPEGKEAVTKELENIGLGSGKTNYRLRDWLVSRQRYWGTPIPIIYCKKCGTVPVPESDLPVELPYNVQFSPDGKSPLLKSEEFMNTTCPICGEPAKREADTLDTFVCSSWYYLRYADNKNTEKAFDKDKINKLLPVDMYVGGPEHACMHLLYARFITKALRDMGFLNFDEPFLSLRHQGLILGPDGQKMSKSKGNTISPDDCIQKYGSDVFRMYLMFGFDYAEGGAWNDDGIKSMSKFVDRIERIVGNIKELINSGKNFKNSMDAAEKELNYSRNYSIKSVSEDAGKFQFNTAIARIMEFTNSLYKYIQEDTKNISLLKDTILDFIKIIAPFAPHFAEEQWEVLGQKYSIFNEKWPEFDPKALVKEEVEIAIQINGKIKAKINIPTNLSDEQIKELSISNDNIKPLLEGKNIKKVIVVKGRLVNIVVKP.

The short motif at 38–49 is the 'HIGH' region element; it reads SYPSGSNLHAGH. The 'KMSKS' region motif lies at 570–574; it reads KMSKS. Lys-573 is an ATP binding site.

The protein belongs to the class-I aminoacyl-tRNA synthetase family.

It localises to the cytoplasm. The catalysed reaction is tRNA(Leu) + L-leucine + ATP = L-leucyl-tRNA(Leu) + AMP + diphosphate. The polypeptide is Leucine--tRNA ligase (Clostridium kluyveri (strain ATCC 8527 / DSM 555 / NBRC 12016 / NCIMB 10680 / K1)).